The following is a 413-amino-acid chain: DNA primase DnaG (413 aa).

The Toprim domain occupies Pro168–Val246. Positions 174, 219, and 221 each coordinate Mg(2+).

Belongs to the archaeal DnaG primase family. As to quaternary structure, forms a ternary complex with MCM helicase and DNA. Component of the archaeal exosome complex. The cofactor is Mg(2+).

It catalyses the reaction ssDNA + n NTP = ssDNA/pppN(pN)n-1 hybrid + (n-1) diphosphate.. Functionally, RNA polymerase that catalyzes the synthesis of short RNA molecules used as primers for DNA polymerase during DNA replication. Also part of the exosome, which is a complex involved in RNA degradation. Acts as a poly(A)-binding protein that enhances the interaction between heteromeric, adenine-rich transcripts and the exosome. This Metallosphaera sedula (strain ATCC 51363 / DSM 5348 / JCM 9185 / NBRC 15509 / TH2) protein is DNA primase DnaG.